The primary structure comprises 439 residues: Putative myrosinase 3 (439 aa).

The first 19 residues, 1–19 (MKFRALGLVLLLAVETCKA), serve as a signal peptide directing secretion. N-linked (GlcNAc...) asparagine glycosylation occurs at Asn33. A beta-D-glucoside-binding positions include His145, 190-191 (NQ), and Tyr316. Asn336 is a glycosylation site (N-linked (GlcNAc...) asparagine). Glu386 and Trp404 together coordinate a beta-D-glucoside. Glu386 serves as the catalytic Nucleophile.

Belongs to the glycosyl hydrolase 1 family. As to expression, expressed specifically in stamens and petals.

The enzyme catalyses a thioglucoside + H2O = a sugar + a thiol.. This is Putative myrosinase 3 from Arabidopsis thaliana (Mouse-ear cress).